A 192-amino-acid polypeptide reads, in one-letter code: Putative manganese efflux pump MntP (192 aa).

The next 6 membrane-spanning stretches (helical) occupy residues 3-23, 38-58, 61-81, 101-121, 130-150, and 167-187; these read LIFT…AVSF, FILA…GWLL, GFAD…LFII, VFNF…ALAV, IVPL…SVGG, and ILGG…HLVW.

It belongs to the MntP (TC 9.B.29) family.

The protein resides in the cell membrane. In terms of biological role, probably functions as a manganese efflux pump. This is Putative manganese efflux pump MntP from Methanospirillum hungatei JF-1 (strain ATCC 27890 / DSM 864 / NBRC 100397 / JF-1).